The chain runs to 358 residues: Protein Wnt-8b (358 aa).

The N-terminal stretch at 1 to 23 is a signal peptide; that stretch reads MFMHLEVYYYAFILMAHMKTCCG. A disulfide bond links Cys-55 and Cys-66. A glycan (N-linked (GlcNAc...) asparagine) is linked at Asn-104. Cystine bridges form between Cys-105–Cys-113, Cys-115–Cys-133, Cys-181–Cys-195, Cys-183–Cys-190, Cys-257–Cys-295, Cys-273–Cys-288, Cys-292–Cys-334, Cys-310–Cys-325, Cys-312–Cys-322, and Cys-317–Cys-318. Ser-187 is lipidated: O-palmitoleoyl serine. 2 N-linked (GlcNAc...) asparagine glycosylation sites follow: Asn-260 and Asn-279. A glycan (N-linked (GlcNAc...) asparagine) is linked at Asn-345.

This sequence belongs to the Wnt family. Post-translationally, palmitoleoylation is required for efficient binding to frizzled receptors. Depalmitoleoylation leads to Wnt signaling pathway inhibition. In terms of processing, proteolytic processing by tiki1 and tiki2 promotes oxidation and formation of large disulfide-bond oligomers, leading to inactivation of wnt8b. Hindbrain r1, 2 and 5.

It is found in the secreted. Its subcellular location is the extracellular space. The protein localises to the extracellular matrix. Ligand for fzd8a, a member of the G-protein coupled frizzled receptor family. May play a role in the establishment of polarity in the nervous system. Involved in canonical Wnt signaling pathway. During embryonic development, required for the acquisition of caudal diencephalic fate. Antagonizes eye specification. In Danio rerio (Zebrafish), this protein is Protein Wnt-8b (wnt8b).